The primary structure comprises 246 residues: Ribosomal RNA small subunit methyltransferase J (246 aa).

S-adenosyl-L-methionine-binding positions include Glu-115 to Arg-116 and Asp-169.

Belongs to the methyltransferase superfamily. RsmJ family.

The protein resides in the cytoplasm. It carries out the reaction guanosine(1516) in 16S rRNA + S-adenosyl-L-methionine = N(2)-methylguanosine(1516) in 16S rRNA + S-adenosyl-L-homocysteine + H(+). Specifically methylates the guanosine in position 1516 of 16S rRNA. The polypeptide is Ribosomal RNA small subunit methyltransferase J (Buchnera aphidicola subsp. Acyrthosiphon pisum (strain Tuc7)).